Here is an 83-residue protein sequence, read N- to C-terminus: Sec-independent protein translocase protein TatA (83 aa).

The chain crosses the membrane as a helical span at residues 1-21 (MGNMGIWQLLIIAVIVILLFG). Composition is skewed to basic and acidic residues over residues 47–57 (EEKKALEETAS) and 71–83 (AEKKTETKDKEQV). The disordered stretch occupies residues 47 to 83 (EEKKALEETASEKATPSVEKTAPNAEKKTETKDKEQV).

Belongs to the TatA/E family. The Tat system comprises two distinct complexes: a TatABC complex, containing multiple copies of TatA, TatB and TatC subunits, and a separate TatA complex, containing only TatA subunits. Substrates initially bind to the TatABC complex, which probably triggers association of the separate TatA complex to form the active translocon.

The protein resides in the cell inner membrane. Functionally, part of the twin-arginine translocation (Tat) system that transports large folded proteins containing a characteristic twin-arginine motif in their signal peptide across membranes. TatA could form the protein-conducting channel of the Tat system. The polypeptide is Sec-independent protein translocase protein TatA (Shewanella woodyi (strain ATCC 51908 / MS32)).